Consider the following 740-residue polypeptide: ATP-dependent RNA helicase DDX1 (740 aa).

A necessary for interaction with HNRNPK region spans residues 1–295; the sequence is MAAFSEMGVM…APKALIVEPS (295 aa). The segment at 1–448 is interaction with dsRNA; it reads MAAFSEMGVM…DTVHHVVVPV (448 aa). A necessary for interaction with RELA region spans residues 1 to 525; sequence MAAFSEMGVM…KIDCDNLEQY (525 aa). Positions 2 to 428 constitute a Helicase ATP-binding domain; that stretch reads AAFSEMGVMP…SEKIMHFPTW (427 aa). 46–53 is an ATP binding site; it reads AETGSGKT. The B30.2/SPRY domain occupies 70 to 247; sequence DQQEGKKGKT…LKFNFGEEEF (178 aa). N6-acetyllysine occurs at positions 239 and 268. The residue at position 281 (lysine 281) is an N6-acetyllysine; alternate. Lysine 281 participates in a covalent cross-link: Glycyl lysine isopeptide (Lys-Gly) (interchain with G-Cter in SUMO2); alternate. Residues 370–373 carry the DEAD box motif; it reads DEAD. Serine 481 carries the post-translational modification Phosphoserine. Residues 493 to 681 enclose the Helicase C-terminal domain; the sequence is KGEYAVRAIK…QVEPDIKVPV (189 aa). Residues 525–740 form a necessary for interaction with HNRNPK region; that stretch reads YFMQQGGGPD…YLPNQLFRTF (216 aa).

It belongs to the DEAD box helicase family. DDX1 subfamily. Found in a multi-helicase-TICAM1 complex at least composed of DHX36, DDX1, DDX21 and TICAM1; this complex exists in resting cells with or without poly(I:C) RNA ligand stimulation. Interacts with DHX36. Interacts (via B30.2/SPRY domain) with DDX21 (via N-terminus); this interaction serves as bridges to TICAM1. Interacts with FAM98A (via N- and C-terminus). Interacts with PHF5A (via C-terminus). Interacts with MBNL1. Interacts with CSTF2. Interacts with HNRNPK. Interacts with ATM. Interacts with RELA (via C-terminus). Component of the tRNA-splicing ligase complex. Interacts with PQBP1. Interacts with ERCC6. Phosphorylated by ATM kinase; phosphorylation is increased in response to ionizing radiation (IR).

It localises to the nucleus. The protein resides in the cytoplasm. It is found in the cytoplasmic granule. The protein localises to the cytosol. Its subcellular location is the mitochondrion. It catalyses the reaction ATP + H2O = ADP + phosphate + H(+). Its function is as follows. Acts as an ATP-dependent RNA helicase, able to unwind both RNA-RNA and RNA-DNA duplexes. Possesses 5' single-stranded RNA overhang nuclease activity. Possesses ATPase activity on various RNA, but not DNA polynucleotides. May play a role in RNA clearance at DNA double-strand breaks (DSBs), thereby facilitating the template-guided repair of transcriptionally active regions of the genome. Together with RELA, acts as a coactivator to enhance NF-kappa-B-mediated transcriptional activation. Acts as a positive transcriptional regulator of cyclin CCND2 expression. Binds to the cyclin CCND2 promoter region. Associates with chromatin at the NF-kappa-B promoter region via association with RELA. Binds to poly(A) RNA. May be involved in 3'-end cleavage and polyadenylation of pre-mRNAs. Component of the tRNA-splicing ligase complex required to facilitate the enzymatic turnover of catalytic subunit RTCB: together with archease (ZBTB8OS), acts by facilitating the guanylylation of RTCB, a key intermediate step in tRNA ligation. Component of a multi-helicase-TICAM1 complex that acts as a cytoplasmic sensor of viral double-stranded RNA (dsRNA) and plays a role in the activation of a cascade of antiviral responses including the induction of pro-inflammatory cytokines via the adapter molecule TICAM1. Specifically binds (via helicase ATP-binding domain) on both short and long poly(I:C) dsRNA. The sequence is that of ATP-dependent RNA helicase DDX1 (DDX1) from Macaca fascicularis (Crab-eating macaque).